A 655-amino-acid polypeptide reads, in one-letter code: Ribonuclease 3 (655 aa).

Disordered regions lie at residues 1–148 and 171–376; these read MENL…NSEK and LIAP…NIPL. A unknown region spans residues 1 to 400; it reads MENLEKNTKK…NYIKDNYPVI (400 aa). The segment covering 8-20 has biased composition (basic residues); the sequence is TKKKIKKPNNFKK. 2 stretches are compositionally biased toward basic and acidic residues: residues 21 to 34 and 69 to 89; these read NNKDKTEELKDKPT and DYEKKIREIQAKEAKKIRSDE. A compositionally biased stretch (low complexity) spans 92 to 102; it reads NNNSKKQNNNK. Over residues 103–115 the composition is skewed to basic residues; it reads QAKKKANKNKKQK. Residues 135-148 show a composition bias toward polar residues; sequence AANNQVKAIPNSEK. Low complexity predominate over residues 206–223; sequence NNFVNNQKNHNKNNAGNK. 2 stretches are compositionally biased toward polar residues: residues 229–242 and 250–259; these read PTKPLNQSKLSKST and PNFTSNQPKP. 2 stretches are compositionally biased toward basic and acidic residues: residues 260-274 and 298-309; these read TQKEDSKKVKAKKAE and DQTKKKQPKENK. The span at 310 to 332 shows a compositional bias: low complexity; that stretch reads NQQIKAVNLNNNQQKTNNNNQKN. A compositionally biased stretch (basic and acidic residues) spans 333-350; it reads SVDKSENDNNKKKSEANQ. Positions 351 to 360 are enriched in low complexity; the sequence is KQENLNPNNN. The segment at 401–655 is RNase 3; the sequence is YADLKEKNRL…KFRGLLKLEK (255 aa). One can recognise an RNase III domain in the interval 432–556; the sequence is LELLLKKFKV…FIGAMYLDQG (125 aa). Glu-472 is a Mg(2+) binding site. Residue Asp-476 is part of the active site. Residues Asp-542 and Glu-545 each coordinate Mg(2+). Glu-545 is a catalytic residue. The DRBM domain occupies 582–649; that stretch reads DYKSIFQEII…AKEAISKFRG (68 aa).

Belongs to the ribonuclease III family. In terms of assembly, homodimer. Requires Mg(2+) as cofactor.

It localises to the cytoplasm. It carries out the reaction Endonucleolytic cleavage to 5'-phosphomonoester.. Functionally, digests double-stranded RNA. Involved in the processing of primary rRNA transcript to yield the immediate precursors to the large and small rRNAs (23S and 16S). Processes some mRNAs, and tRNAs when they are encoded in the rRNA operon. Processes pre-crRNA and tracrRNA of type II CRISPR loci if present in the organism. This Mycoplasmoides gallisepticum (strain R(low / passage 15 / clone 2)) (Mycoplasma gallisepticum) protein is Ribonuclease 3 (rnc).